The sequence spans 216 residues: Sperm microtubule inner protein 8 (216 aa).

Microtubule inner protein component of sperm flagellar doublet microtubules. In terms of tissue distribution, expressed in sperm.

It is found in the cytoplasm. Its subcellular location is the cytoskeleton. The protein localises to the flagellum axoneme. In terms of biological role, microtubule inner protein (MIP) part of the dynein-decorated doublet microtubules (DMTs) in flagellum axoneme. May serve to reinforce and thus stabilize the microtubule structure in the sperm flagella. In Bos taurus (Bovine), this protein is Sperm microtubule inner protein 8 (SPMIP8).